The following is a 292-amino-acid chain: Protease HtpX (292 aa).

Helical transmembrane passes span 4-24 (IVLF…ILFL) and 32-52 (IYGL…LSLI). Residue His139 participates in Zn(2+) binding. Residue Glu140 is part of the active site. His143 is a binding site for Zn(2+). The next 2 membrane-spanning stretches (helical) occupy residues 147–167 (GDMI…IFIS) and 193–213 (FVYF…ASII). Zn(2+) is bound at residue Glu222.

It belongs to the peptidase M48B family. It depends on Zn(2+) as a cofactor.

The protein localises to the cell membrane. The polypeptide is Protease HtpX (Buchnera aphidicola subsp. Acyrthosiphon pisum (strain 5A)).